A 263-amino-acid polypeptide reads, in one-letter code: Insulin-like growth factor-binding protein 1 (263 aa).

Positions 1-25 are cleaved as a signal peptide; the sequence is MPEVLAVRAWPLLLSLAVQLGATVG. An IGFBP N-terminal domain is found at 28–109; it reads QPWRCAPCSA…TRGQGACMTT (82 aa). Disulfide bonds link cysteine 32/cysteine 59, cysteine 35/cysteine 61, cysteine 43/cysteine 62, cysteine 50/cysteine 65, cysteine 73/cysteine 86, and cysteine 80/cysteine 106. The segment at 102-131 is disordered; sequence GQGACMTTPSDEATDTKDTTSPENVSPESS. Residues serine 122, serine 127, serine 130, serine 148, and serine 160 each carry the phosphoserine modification. A compositionally biased stretch (polar residues) spans 122-131; the sequence is SPENVSPESS. A Phosphotyrosine modification is found at tyrosine 162. Residues 177-255 form the Thyroglobulin type-1 domain; sequence KEPCQRELYK…SVAVRGDPKC (79 aa). 3 disulfides stabilise this stretch: cysteine 180–cysteine 210, cysteine 221–cysteine 232, and cysteine 234–cysteine 255. Serine 246 carries the phosphoserine modification. The Cell attachment site motif lies at 250-252; that stretch reads RGD.

As to quaternary structure, binds equally well IGF1 and IGF2. Interacts with integrin ITGA5:ITGB1. Interacts with VHL; this interaction inhibits HIF1A degradation.

It is found in the secreted. Its function is as follows. Multifunctional protein that plays a critical role in regulating the availability of IGFs such as IGF1 and IGF2 to their receptors and thereby regulates IGF-mediated cellular processes including cell migration, proliferation, differentiation or apoptosis in a cell-type specific manner. Also plays a positive role in cell migration by interacting with integrin ITGA5:ITGB1 through its RGD motif. Mechanistically, binding to integrins leads to activation of focal adhesion kinase/PTK2 and stimulation of the mitogen-activated protein kinase (MAPK) pathway. Regulates cardiomyocyte apoptosis by suppressing HIF-1alpha/HIF1A degradation through ubiquitination. The chain is Insulin-like growth factor-binding protein 1 (IGFBP1) from Bos taurus (Bovine).